A 223-amino-acid polypeptide reads, in one-letter code: Fibronectin type III domain-containing protein 10 (223 aa).

The first 19 residues, 1–19, serve as a signal peptide directing secretion; sequence MRAPPLLLLLAACAPPSGA. Residues 20–179 lie on the Extracellular side of the membrane; sequence AVDPTPPGWE…FTAEPAAMQE (160 aa). Residues 72 to 168 form the Fibronectin type-III domain; the sequence is LASAGGSLRA…VVPPELAECV (97 aa). N-linked (GlcNAc...) asparagine glycosylation is found at asparagine 86 and asparagine 109. Residues 180-200 traverse the membrane as a helical segment; that stretch reads IVVAMTAVGGSICVMLVVICL. The Cytoplasmic portion of the chain corresponds to 201-223; that stretch reads LVAYITENLMHPTFRRPSLRRQP.

Its subcellular location is the membrane. This chain is Fibronectin type III domain-containing protein 10 (Fndc10), found in Mus musculus (Mouse).